The primary structure comprises 310 residues: Protoheme IX farnesyltransferase (310 aa).

9 helical membrane-spanning segments follow: residues valine 30–alanine 47, glycine 50–glycine 70, leucine 102–leucine 122, tryptophan 126–leucine 146, isoleucine 152–isoleucine 172, valine 181–leucine 201, isoleucine 228–alanine 248, isoleucine 251–phenylalanine 271, and alanine 286–leucine 306.

Belongs to the UbiA prenyltransferase family. Protoheme IX farnesyltransferase subfamily.

The protein localises to the cell inner membrane. It catalyses the reaction heme b + (2E,6E)-farnesyl diphosphate + H2O = Fe(II)-heme o + diphosphate. It functions in the pathway porphyrin-containing compound metabolism; heme O biosynthesis; heme O from protoheme: step 1/1. Functionally, converts heme B (protoheme IX) to heme O by substitution of the vinyl group on carbon 2 of heme B porphyrin ring with a hydroxyethyl farnesyl side group. The chain is Protoheme IX farnesyltransferase from Koribacter versatilis (strain Ellin345).